Consider the following 149-residue polypeptide: MSKTLSFKTYSAKPAEVERKWYVIDAEDQILGRMAAEIAKVLRGKHKPQFTPHIDTGDFIVVTNAEKVALSGKKIEYKTYFHHSNYPGGGKFDHVKDLLKKKPEKVIEHAVWGMLPHNNLGRQLFKKLKVYAGSEHPHTAQCPVELKVN.

The protein belongs to the universal ribosomal protein uL13 family. Part of the 50S ribosomal subunit.

Its function is as follows. This protein is one of the early assembly proteins of the 50S ribosomal subunit, although it is not seen to bind rRNA by itself. It is important during the early stages of 50S assembly. The chain is Large ribosomal subunit protein uL13 from Chlorobium limicola (strain DSM 245 / NBRC 103803 / 6330).